A 338-amino-acid polypeptide reads, in one-letter code: Lipoate-protein ligase A (338 aa).

Residues proline 29 to valine 216 enclose the BPL/LPL catalytic domain. ATP is bound by residues arginine 71, glycine 76–phenylalanine 79, and lysine 134. Position 134 (lysine 134) interacts with (R)-lipoate.

Belongs to the LplA family. As to quaternary structure, monomer.

The protein localises to the cytoplasm. It catalyses the reaction L-lysyl-[lipoyl-carrier protein] + (R)-lipoate + ATP = N(6)-[(R)-lipoyl]-L-lysyl-[lipoyl-carrier protein] + AMP + diphosphate + H(+). It participates in protein modification; protein lipoylation via exogenous pathway; protein N(6)-(lipoyl)lysine from lipoate: step 1/2. The protein operates within protein modification; protein lipoylation via exogenous pathway; protein N(6)-(lipoyl)lysine from lipoate: step 2/2. Catalyzes both the ATP-dependent activation of exogenously supplied lipoate to lipoyl-AMP and the transfer of the activated lipoyl onto the lipoyl domains of lipoate-dependent enzymes. The polypeptide is Lipoate-protein ligase A (Escherichia coli (strain SMS-3-5 / SECEC)).